The chain runs to 283 residues: 4-diphosphocytidyl-2-C-methyl-D-erythritol kinase (283 aa).

The active site involves K10. 99-109 (PMGGGLGGGSS) lines the ATP pocket. The active site involves D141.

It belongs to the GHMP kinase family. IspE subfamily. Homodimer.

It carries out the reaction 4-CDP-2-C-methyl-D-erythritol + ATP = 4-CDP-2-C-methyl-D-erythritol 2-phosphate + ADP + H(+). It functions in the pathway isoprenoid biosynthesis; isopentenyl diphosphate biosynthesis via DXP pathway; isopentenyl diphosphate from 1-deoxy-D-xylulose 5-phosphate: step 3/6. Functionally, catalyzes the phosphorylation of the position 2 hydroxy group of 4-diphosphocytidyl-2C-methyl-D-erythritol. This is 4-diphosphocytidyl-2-C-methyl-D-erythritol kinase from Salmonella arizonae (strain ATCC BAA-731 / CDC346-86 / RSK2980).